A 309-amino-acid polypeptide reads, in one-letter code: Peptide methionine sulfoxide reductase MsrA/MsrB (309 aa).

The interval 1–153 (MIYLAGGCFW…PNGYCHIDIN (153 aa)) is peptide methionine sulfoxide reductase A. C8 is an active-site residue. A MsrB domain is found at 170-293 (ATEIKEKLSA…NSLSITFIPK (124 aa)). The active-site Nucleophile is the C282.

It in the N-terminal section; belongs to the MsrA Met sulfoxide reductase family. This sequence in the C-terminal section; belongs to the MsrB Met sulfoxide reductase family.

It catalyses the reaction L-methionyl-[protein] + [thioredoxin]-disulfide + H2O = L-methionyl-(S)-S-oxide-[protein] + [thioredoxin]-dithiol. It carries out the reaction [thioredoxin]-disulfide + L-methionine + H2O = L-methionine (S)-S-oxide + [thioredoxin]-dithiol. The enzyme catalyses L-methionyl-[protein] + [thioredoxin]-disulfide + H2O = L-methionyl-(R)-S-oxide-[protein] + [thioredoxin]-dithiol. Has an important function as a repair enzyme for proteins that have been inactivated by oxidation. Catalyzes the reversible oxidation-reduction of methionine sulfoxide in proteins to methionine. The sequence is that of Peptide methionine sulfoxide reductase MsrA/MsrB (msrAB) from Streptococcus pyogenes serotype M1.